Here is a 1481-residue protein sequence, read N- to C-terminus: Cystic fibrosis transmembrane conductance regulator (1481 aa).

Residues 1 to 77 (MQKSPLVKAS…KLINALRRCF (77 aa)) lie on the Cytoplasmic side of the membrane. The helical transmembrane segment at 78 to 98 (LWRFIFYGILLYLGEVTKAVQ) threads the bilayer. Positions 81–365 (FIFYGILLYL…GAVQTWYDSL (285 aa)) constitute an ABC transmembrane type-1 1 domain. Topologically, residues 99-122 (PLLLGRIIASYDPDNKEERSIAIY) are extracellular. A helical transmembrane segment spans residues 123-146 (LAIGLCLLFIVRTLLLHPAIFGLQ). The Cytoplasmic segment spans residues 147–195 (HIGMQMRIAMFSLIYKKTLKLSSRVLDKISIGQLVSLLSNNLNKFDEGL). Residues 196-216 (ALAHFVWIAPLQVTLLMGLLW) form a helical membrane-spanning segment. The Extracellular segment spans residues 217 to 222 (DLLQAS). The chain crosses the membrane as a helical span at residues 223–243 (AFCGLAVLIVLALFQAWLGKM). The Cytoplasmic segment spans residues 244 to 298 (MMKYRDQRAGKINERLVITSEMIENIQSVKAYCWEEAMEKMIENLRQTELKLTRK). The helical transmembrane segment at 299 to 319 (AAYMRYFNSAAFFFSGFFVVF) threads the bilayer. Over 320–339 (LSVLPYAFLQGIILRKIFTT) the chain is Extracellular. A helical membrane pass occupies residues 340–358 (ISFCIVLRMAITRQFPGAV). The Cytoplasmic segment spans residues 359 to 859 (QTWYDSLGAI…YLRYITVHKS (501 aa)). ATP-binding positions include tryptophan 401, serine 435, 459–466 (GSTGAGKT), and glutamine 494. One can recognise an ABC transporter 1 domain in the interval 424–647 (NGDNKLFFSN…RPDFSSKLMG (224 aa)). Residue cysteine 525 is the site of S-palmitoyl cysteine attachment. Residue serine 550 is modified to Phosphoserine. The tract at residues 655–832 (SAERRNSILT…EEINEEDLKE (178 aa)) is disordered R region. A phosphoserine; by PKA mark is found at serine 661 and serine 671. A Phosphoserine; by PKC modification is found at serine 687. Lysine 689 is covalently cross-linked (Glycyl lysine isopeptide (Lys-Gly) (interchain with G-Cter in ubiquitin)). A phosphoserine; by PKA mark is found at serine 701 and serine 713. Threonine 718 carries the post-translational modification Phosphothreonine. Phosphoserine; by PKA is present on residues serine 738, serine 769, serine 796, and serine 814. The chain crosses the membrane as a helical span at residues 860-880 (LILVLIWCLIIFLAEVAASLV). Residues 860 to 1156 (LILVLIWCLI…AVNSSIDVDS (297 aa)) form the ABC transmembrane type-1 2 domain. The Extracellular portion of the chain corresponds to 881–919 (VLWLLKNNTPQQEMNSTQSGNRSYPVIITNTSFYYIFYI). N-linked (GlcNAc...) asparagine glycosylation is found at asparagine 895 and asparagine 901. Residues 920-940 (YVGVADTLLALGLFRGLPLVH) traverse the membrane as a discontinuously helical segment. The Cytoplasmic segment spans residues 941–991 (TLITVSKILHHKMLRSVLQAPMSTLNALKAGGILNRFSKDIAILDDLLPLT). Residues 992 to 1012 (IFDFIQLLLIVIGAIAVVSVL) traverse the membrane as a helical segment. At 1013-1014 (QP) the chain is on the extracellular side. Residues 1015 to 1035 (YIFLATVPVIAAFIMLRAYFL) traverse the membrane as a helical segment. The Cytoplasmic segment spans residues 1036 to 1096 (HTSQQLKQLE…TANWFLYLST (61 aa)). The helical transmembrane segment at 1097-1117 (LRWFQMRIEMIFVIFFIAVTF) threads the bilayer. Over 1118–1131 (ISILTTGEGQGSVG) the chain is Extracellular. The helical transmembrane segment at 1132–1152 (IILTLAMNIMSTLQWAVNSSI) threads the bilayer. The Cytoplasmic segment spans residues 1153–1481 (DVDSLMRSVS…TEEEVQETRL (329 aa)). Residues 1211 to 1444 (MIVKDLTAKY…KSLFRQAISS (234 aa)) enclose the ABC transporter 2 domain. Residues tyrosine 1220 and 1245-1252 (GRTGSGKS) contribute to the ATP site. The interval 1387–1481 (RTIKQAFADC…TEEEVQETRL (95 aa)) is interaction with GORASP2. A lipid anchor (S-palmitoyl cysteine) is attached at cysteine 1396. 2 positions are modified to phosphoserine: serine 1445 and serine 1457. Residues 1453–1462 (HRNSSKHKSR) are compositionally biased toward basic residues. Residues 1453–1481 (HRNSSKHKSRSQITALKEETEEEVQETRL) are disordered. Positions 1471–1481 (ETEEEVQETRL) are enriched in acidic residues. The short motif at 1479–1481 (TRL) is the PDZ-binding element.

Belongs to the ABC transporter superfamily. ABCC family. CFTR transporter (TC 3.A.1.202) subfamily. Monomer; does not require oligomerization for channel activity. May form oligomers in the membrane. Interacts with SLC26A3, SLC26A6 and NHERF1. Interacts with SHANK2. Interacts with MYO6. Interacts (via C-terminus) with GOPC (via PDZ domain); this promotes CFTR internalization and thereby decreases channel activity. Interacts with SLC4A7 through NHERF1. Found in a complex with MYO5B and RAB11A. Interacts with ANO1. Interacts with SLC26A8. Interacts with AHCYL1; the interaction increases CFTR activity. Interacts with CSE1L. The core-glycosylated form interacts with GORASP2 (via PDZ GRASP-type 1 domain) in respone to ER stress. Interacts with MARCHF2; the interaction leads to CFTR ubiqtuitination and degradation. Interacts with ADGRG2. In terms of processing, N-glycosylated. Post-translationally, phosphorylated; cAMP treatment promotes phosphorylation and activates the channel. Dephosphorylation decreases the ATPase activity (in vitro). Phosphorylation at PKA sites activates the channel. Phosphorylation at PKC sites enhances the response to phosphorylation by PKA. Phosphorylated by AMPK; this inhibits channel activity. Ubiquitinated, leading to its degradation in the lysosome. Deubiquitination by USP10 in early endosomes enhances its endocytic recycling to the cell membrane. Ubiquitinated by RNF185 during ER stress. Ubiquitinated by MARCHF2.

The protein resides in the apical cell membrane. The protein localises to the early endosome membrane. It localises to the cell membrane. Its subcellular location is the recycling endosome membrane. It is found in the endoplasmic reticulum membrane. The protein resides in the nucleus. The enzyme catalyses ATP + H2O + closed Cl(-) channel = ADP + phosphate + open Cl(-) channel.. It catalyses the reaction chloride(in) = chloride(out). It carries out the reaction hydrogencarbonate(in) = hydrogencarbonate(out). The catalysed reaction is ATP + H2O = ADP + phosphate + H(+). Functionally, epithelial ion channel that plays an important role in the regulation of epithelial ion and water transport and fluid homeostasis. Mediates the transport of chloride ions across the cell membrane. Possesses an intrinsic ATPase activity and utilizes ATP to gate its channel; the passive flow of anions through the channel is gated by cycles of ATP binding and hydrolysis by the ATP-binding domains. The ion channel is also permeable to HCO(3)(-); selectivity depends on the extracellular chloride concentration. Exerts its function also by modulating the activity of other ion channels and transporters. Contributes to the regulation of the pH and the ion content of the epithelial fluid layer. Modulates the activity of the epithelial sodium channel (ENaC) complex, in part by regulating the cell surface expression of the ENaC complex. May regulate bicarbonate secretion and salvage in epithelial cells by regulating the transporter SLC4A7. Can inhibit the chloride channel activity of ANO1. Plays a role in the chloride and bicarbonate homeostasis during sperm epididymal maturation and capacitation. The protein is Cystic fibrosis transmembrane conductance regulator of Cavia porcellus (Guinea pig).